A 319-amino-acid chain; its full sequence is MVKSKLGVLLVNLGTPDAPTVPAIKRYLKQFLSDRRVIDTPPILWWPLLRGIVLPFRSRRVAKLYQSIWMPEGSPLLVYSDRQQKALAARLPDASVELAMSYGSPSLGDAINRLITQGIIKLVILPLYPQYSATTCGSVWDAVSGILKKYRSLPSIYFIRDYAQHPSYINALKQSVARYFEKHGQPDKLLLSFHGIPQRYVRLGDDYPKRCEDTYRALSTALGLHNNKIMMTYQSRFGWEPWLTPYTDKTLKSLPAKGIKHIQVLCPGFSADCLETLEEIKEQNKEIFLKAGGKKFEYIPALNDSPEQIDLLEQLVSLG.

Residues His194 and Glu275 each contribute to the Fe cation site.

It belongs to the ferrochelatase family.

The protein localises to the cytoplasm. The enzyme catalyses heme b + 2 H(+) = protoporphyrin IX + Fe(2+). The protein operates within porphyrin-containing compound metabolism; protoheme biosynthesis; protoheme from protoporphyrin-IX: step 1/1. Functionally, catalyzes the ferrous insertion into protoporphyrin IX. This Hamiltonella defensa subsp. Acyrthosiphon pisum (strain 5AT) protein is Ferrochelatase.